The following is a 211-amino-acid chain: tRNA (guanine-N(7)-)-methyltransferase (211 aa).

S-adenosyl-L-methionine is bound by residues Glu-43, Asp-68, Asn-95, and Asn-117. Substrate contacts are provided by residues Lys-121, Asp-153, and 190–193; that span reads TEYE.

This sequence belongs to the class I-like SAM-binding methyltransferase superfamily. TrmB family.

It catalyses the reaction guanosine(46) in tRNA + S-adenosyl-L-methionine = N(7)-methylguanosine(46) in tRNA + S-adenosyl-L-homocysteine. The protein operates within tRNA modification; N(7)-methylguanine-tRNA biosynthesis. Catalyzes the formation of N(7)-methylguanine at position 46 (m7G46) in tRNA. The protein is tRNA (guanine-N(7)-)-methyltransferase of Clostridium kluyveri (strain ATCC 8527 / DSM 555 / NBRC 12016 / NCIMB 10680 / K1).